Consider the following 258-residue polypeptide: Synaptosomal-associated protein 29 (258 aa).

A disordered region spans residues 1 to 41 (MSAYPKSYNPFDDDGEDEGARPAPWRDARDLPDGPDAPADR). Residues 18–32 (EGARPAPWRDARDLP) show a composition bias toward basic and acidic residues. Residues 76–107 (ASSEELARQRGVLERTEKMVDKMDQDLKISQK) adopt a coiled-coil conformation. Phosphoserine occurs at positions 77, 78, and 114. The tract at residues 127 to 190 (PVETPPEQNG…GSAVSTDAYP (64 aa)) is disordered. Thr-130 and Thr-137 each carry phosphothreonine. Over residues 132–144 (PEQNGTLASQPNS) the composition is skewed to polar residues. Residues Ser-163, Ser-182, Ser-185, Ser-204, and Ser-210 each carry the phosphoserine modification. The t-SNARE coiled-coil homology domain occupies 196–258 (QAYHQKIDSN…KSTERKVRQL (63 aa)).

This sequence belongs to the SNAP-25 family. In terms of assembly, forms a SNARE complex, composed of VAMP8, SNAP29 and STX17, involved in fusion of autophagosome with lysosome. Interacts with multiple syntaxins including STX6. Interacts with EIPR1. Interacts with STX17; this interaction is increased in the absence of TMEM39A.

The protein resides in the cytoplasm. Its subcellular location is the golgi apparatus membrane. The protein localises to the cytoplasmic vesicle. It is found in the autophagosome membrane. It localises to the cell projection. The protein resides in the cilium membrane. Its function is as follows. SNAREs, soluble N-ethylmaleimide-sensitive factor-attachment protein receptors, are essential proteins for fusion of cellular membranes. SNAREs localized on opposing membranes assemble to form a trans-SNARE complex, an extended, parallel four alpha-helical bundle that drives membrane fusion. SNAP29 is a SNARE involved in autophagy through the direct control of autophagosome membrane fusion with the lysososome membrane. Also plays a role in ciliogenesis by regulating membrane fusions. This Pongo abelii (Sumatran orangutan) protein is Synaptosomal-associated protein 29.